We begin with the raw amino-acid sequence, 282 residues long: Protein NEOXANTHIN-DEFICIENT 1 (282 aa).

Its function is as follows. Required for neoxanthin biosynthesis. Probably not involved directly in the enzymatic conversion of violaxanthin to neoxanthin. Is necessary but not sufficient for neoxanthin synthesis. The chain is Protein NEOXANTHIN-DEFICIENT 1 from Arabidopsis thaliana (Mouse-ear cress).